The primary structure comprises 248 residues: Type II restriction enzyme XhoI (248 aa).

It belongs to the XhoI type II restriction endonuclease family.

The enzyme catalyses Endonucleolytic cleavage of DNA to give specific double-stranded fragments with terminal 5'-phosphates.. Its function is as follows. A P subtype restriction enzyme that recognizes the double-stranded sequence 5'-CTCGAG-3' and cleaves after C-1. This Xanthomonas vasicola protein is Type II restriction enzyme XhoI.